The sequence spans 405 residues: CMP-sialic acid transporter 4 (405 aa).

Residues 1 to 43 lie on the Cytoplasmic side of the membrane; sequence MQRNGVMECSVCHSKVVAPSPRSVSRAYDKHRSKISSKYRALN. A helical transmembrane segment spans residues 44–64; that stretch reads FLLVSGDCILVGLQPILVFMS. Residues 65–74 lie on the Lumenal side of the membrane; that stretch reads KVDGKFQFSP. The helical transmembrane segment at 75 to 95 threads the bilayer; it reads ISVNFLTEVTKVIFAIVMLII. Residues 96-121 lie on the Cytoplasmic side of the membrane; sequence QSRKQKVGEKPLLSLSTFVQAARNNA. The chain crosses the membrane as a helical span at residues 122–142; sequence LLAVPALLYAINNYLKFIMQL. Tyrosine 143 is a topological domain (lumenal). Residues 144–164 form a helical membrane-spanning segment; the sequence is FSPATVKMLSNLKVLVIAILL. The Cytoplasmic portion of the chain corresponds to 165 to 171; sequence KFIMRRK. Residues 172–192 traverse the membrane as a helical segment; that stretch reads FSIIQWEALALLLIGISVNQL. The Lumenal segment spans residues 193–203; sequence SSIPDGTKSFG. Residues 204-224 form a helical membrane-spanning segment; that stretch reads LAVTTIAYIYTLIFVTVPSLA. At 225–244 the chain is on the cytoplasmic side; the sequence is SVYNEYALKSQFDTSIYLQN. The helical transmembrane segment at 245 to 265 threads the bilayer; that stretch reads LFLYGYGAIFNFLGILGTVIF. The Lumenal segment spans residues 266 to 281; that stretch reads QGPESFDILQGHSRAT. A helical membrane pass occupies residues 282–302; that stretch reads MFLICNNAAQGILSSFFFKYA. Over 303 to 322 the chain is Cytoplasmic; sequence DTILKKYSSTVATIFTGLAS. The helical transmembrane segment at 323–343 threads the bilayer; sequence AAFLGHTLTVNFLLGISIVFI. Over 344–405 the chain is Lumenal; the sequence is SMHQFFSPLA…TDERKPLLPI (62 aa). The interval 386–405 is disordered; it reads AADDASHLTSTDERKPLLPI. The span at 389–405 shows a compositional bias: basic and acidic residues; it reads DASHLTSTDERKPLLPI.

Belongs to the nucleotide-sugar transporter family. CMP-Sialate:CMP antiporter (TC 2.A.7.12) subfamily.

It localises to the golgi apparatus membrane. Functionally, sugar transporter involved in the transport of CMP-sialic acid from the cytoplasm into the Golgi. May transport important nucleotide sugars such as CMP-Kdo (2-keto-3-deoxy-D-manno-octulosonic acid) in physiological conditions. This Oryza sativa subsp. indica (Rice) protein is CMP-sialic acid transporter 4.